Consider the following 485-residue polypeptide: Aspartyl/glutamyl-tRNA(Asn/Gln) amidotransferase subunit B (485 aa).

Belongs to the GatB/GatE family. GatB subfamily. In terms of assembly, heterotrimer of A, B and C subunits.

The enzyme catalyses L-glutamyl-tRNA(Gln) + L-glutamine + ATP + H2O = L-glutaminyl-tRNA(Gln) + L-glutamate + ADP + phosphate + H(+). It catalyses the reaction L-aspartyl-tRNA(Asn) + L-glutamine + ATP + H2O = L-asparaginyl-tRNA(Asn) + L-glutamate + ADP + phosphate + 2 H(+). Its function is as follows. Allows the formation of correctly charged Asn-tRNA(Asn) or Gln-tRNA(Gln) through the transamidation of misacylated Asp-tRNA(Asn) or Glu-tRNA(Gln) in organisms which lack either or both of asparaginyl-tRNA or glutaminyl-tRNA synthetases. The reaction takes place in the presence of glutamine and ATP through an activated phospho-Asp-tRNA(Asn) or phospho-Glu-tRNA(Gln). The protein is Aspartyl/glutamyl-tRNA(Asn/Gln) amidotransferase subunit B of Methylacidiphilum infernorum (isolate V4) (Methylokorus infernorum (strain V4)).